An 85-amino-acid polypeptide reads, in one-letter code: Small ribosomal subunit protein bS16c (85 aa).

Belongs to the bacterial ribosomal protein bS16 family.

It is found in the plastid. Its subcellular location is the chloroplast. The chain is Small ribosomal subunit protein bS16c from Cucumis sativus (Cucumber).